A 427-amino-acid chain; its full sequence is Flotillin-1 (427 aa).

3 positions are modified to phosphoserine: Ser-19, Ser-163, and Ser-385. Thr-387 is subject to Phosphothreonine.

The protein belongs to the band 7/mec-2 family. Flotillin subfamily. In terms of assembly, heterooligomeric complex of flotillin-1 and flotillin-2 and caveolin-1 and caveolin-2. Interacts with ECPAS.

The protein resides in the cell membrane. It is found in the endosome. Its subcellular location is the membrane. The protein localises to the caveola. It localises to the melanosome. The protein resides in the membrane raft. Functionally, may act as a scaffolding protein within caveolar membranes, functionally participating in formation of caveolae or caveolae-like vesicles. In Homo sapiens (Human), this protein is Flotillin-1 (FLOT1).